Reading from the N-terminus, the 346-residue chain is Cytochrome c551 peroxidase (346 aa).

Residues methionine 1–alanine 23 form the signal peptide. Cysteine 74, cysteine 77, histidine 78, cysteine 220, cysteine 223, histidine 224, histidine 284, and methionine 298 together coordinate heme c.

Requires heme c as cofactor. Binds 2 heme groups per subunit. Sequencing of the whole protein indicates about 20% starts on Val-247.

Its subcellular location is the periplasm. The enzyme catalyses 2 Fe(II)-[cytochrome c] + H2O2 + 2 H(+) = 2 Fe(III)-[cytochrome c] + 2 H2O. Its function is as follows. Catalyzes the peroxidative oxidation of azurin and cytochrome c551. Likely to provide protection against toxic peroxides. This is Cytochrome c551 peroxidase (ccpA) from Pseudomonas aeruginosa (strain ATCC 15692 / DSM 22644 / CIP 104116 / JCM 14847 / LMG 12228 / 1C / PRS 101 / PAO1).